The sequence spans 103 residues: Acyl carrier protein homolog (103 aa).

One can recognise a Carrier domain in the interval 3–87 (ELTSEIKKEI…ETLEKVVQTT (85 aa)). The residue at position 45 (S45) is an O-(pantetheine 4'-phosphoryl)serine.

In terms of processing, 4'-phosphopantetheine is transferred from CoA to a specific serine of the apo-ACP-like protein.

It localises to the cytoplasm. Acyl carrier protein. This is Acyl carrier protein homolog from Clostridium acetobutylicum (strain ATCC 824 / DSM 792 / JCM 1419 / IAM 19013 / LMG 5710 / NBRC 13948 / NRRL B-527 / VKM B-1787 / 2291 / W).